A 425-amino-acid chain; its full sequence is Light-independent protochlorophyllide reductase subunit N (425 aa).

[4Fe-4S] cluster-binding residues include Cys17, Cys42, and Cys103.

Belongs to the BchN/ChlN family. Protochlorophyllide reductase is composed of three subunits; ChlL, ChlN and ChlB. Forms a heterotetramer of two ChlB and two ChlN subunits. It depends on [4Fe-4S] cluster as a cofactor.

It catalyses the reaction chlorophyllide a + oxidized 2[4Fe-4S]-[ferredoxin] + 2 ADP + 2 phosphate = protochlorophyllide a + reduced 2[4Fe-4S]-[ferredoxin] + 2 ATP + 2 H2O. It participates in porphyrin-containing compound metabolism; chlorophyll biosynthesis (light-independent). Functionally, component of the dark-operative protochlorophyllide reductase (DPOR) that uses Mg-ATP and reduced ferredoxin to reduce ring D of protochlorophyllide (Pchlide) to form chlorophyllide a (Chlide). This reaction is light-independent. The NB-protein (ChlN-ChlB) is the catalytic component of the complex. The sequence is that of Light-independent protochlorophyllide reductase subunit N from Parasynechococcus marenigrum (strain WH8102).